The following is a 566-amino-acid chain: Membrane protein insertase YidC (566 aa).

5 consecutive transmembrane segments (helical) span residues 3–23, 346–366, 369–389, 436–456, and 509–529; these read IKRI…FNAW, GWLW…HAVV, WGWS…WFSA, GGCL…YVII, and MWIL…GLVL.

It belongs to the OXA1/ALB3/YidC family. Type 1 subfamily. Interacts with the Sec translocase complex via SecD. Specifically interacts with transmembrane segments of nascent integral membrane proteins during membrane integration.

The protein resides in the cell inner membrane. Functionally, required for the insertion and/or proper folding and/or complex formation of integral membrane proteins into the membrane. Involved in integration of membrane proteins that insert both dependently and independently of the Sec translocase complex, as well as at least some lipoproteins. Aids folding of multispanning membrane proteins. In Coxiella burnetii (strain RSA 331 / Henzerling II), this protein is Membrane protein insertase YidC.